The primary structure comprises 207 residues: Thiamine-phosphate synthase (207 aa).

4-amino-2-methyl-5-(diphosphooxymethyl)pyrimidine-binding positions include 36-40 (QLRIK) and aspartate 68. Mg(2+) contacts are provided by aspartate 69 and aspartate 88. Position 106 (serine 106) interacts with 4-amino-2-methyl-5-(diphosphooxymethyl)pyrimidine. 132-134 (TKT) contributes to the 2-[(2R,5Z)-2-carboxy-4-methylthiazol-5(2H)-ylidene]ethyl phosphate binding site. Lysine 135 is a binding site for 4-amino-2-methyl-5-(diphosphooxymethyl)pyrimidine. 2-[(2R,5Z)-2-carboxy-4-methylthiazol-5(2H)-ylidene]ethyl phosphate contacts are provided by residues glycine 162 and 182–183 (VS).

It belongs to the thiamine-phosphate synthase family. The cofactor is Mg(2+).

It catalyses the reaction 2-[(2R,5Z)-2-carboxy-4-methylthiazol-5(2H)-ylidene]ethyl phosphate + 4-amino-2-methyl-5-(diphosphooxymethyl)pyrimidine + 2 H(+) = thiamine phosphate + CO2 + diphosphate. The enzyme catalyses 2-(2-carboxy-4-methylthiazol-5-yl)ethyl phosphate + 4-amino-2-methyl-5-(diphosphooxymethyl)pyrimidine + 2 H(+) = thiamine phosphate + CO2 + diphosphate. The catalysed reaction is 4-methyl-5-(2-phosphooxyethyl)-thiazole + 4-amino-2-methyl-5-(diphosphooxymethyl)pyrimidine + H(+) = thiamine phosphate + diphosphate. The protein operates within cofactor biosynthesis; thiamine diphosphate biosynthesis; thiamine phosphate from 4-amino-2-methyl-5-diphosphomethylpyrimidine and 4-methyl-5-(2-phosphoethyl)-thiazole: step 1/1. Its function is as follows. Condenses 4-methyl-5-(beta-hydroxyethyl)thiazole monophosphate (THZ-P) and 2-methyl-4-amino-5-hydroxymethyl pyrimidine pyrophosphate (HMP-PP) to form thiamine monophosphate (TMP). The protein is Thiamine-phosphate synthase of Pyrococcus abyssi (strain GE5 / Orsay).